A 359-amino-acid chain; its full sequence is Gap junction alpha-5 protein (359 aa).

The Cytoplasmic segment spans residues 1–19 (MGDWSFLGEFLEEVHKHST). The helical transmembrane segment at 20 to 40 (VIGKVWLTVLFIFRMLVLGTA) threads the bilayer. Over 41-76 (AESSWGDEQADFLCDTMQPGCENVCYDQAFPISHIR) the chain is Extracellular. Residues 77 to 97 (YWVLQVIFVSTPSLVYLGHAV) traverse the membrane as a helical segment. Residues 98–165 (HMVRVQEKRK…CSILIRTTME (68 aa)) are Cytoplasmic-facing. Residues 166 to 186 (VAFIVGQYLLYGVFLDTLHVC) traverse the membrane as a helical segment. Residues 187 to 206 (RRSPCPHPVNCYVSRPTEKN) are Extracellular-facing. The chain crosses the membrane as a helical span at residues 207-227 (VFIVFMLAVAGLSLFLSLAEL). Residues 228-359 (YHLGWKKIRQ…SKARSDDLSV (132 aa)) are Cytoplasmic-facing. 2 disordered regions span residues 285–305 (SNKMASQQNTDNLSTEQVRSQ) and 317–359 (RYAQ…DLSV). S354 and S358 each carry phosphoserine.

Belongs to the connexin family. Alpha-type (group II) subfamily. A connexon is composed of a hexamer of connexins.

It localises to the cell membrane. It is found in the cell junction. The protein localises to the gap junction. Its function is as follows. One gap junction consists of a cluster of closely packed pairs of transmembrane channels, the connexons, through which materials of low MW diffuse from one cell to a neighboring cell. This Bos taurus (Bovine) protein is Gap junction alpha-5 protein (GJA5).